The primary structure comprises 2067 residues: Dedicator of cytokinesis protein 11 (2067 aa).

Residues Gly-162 to Leu-269 form the PH domain. A disordered region spans residues Asp-274 to Ser-302. A compositionally biased stretch (polar residues) spans Ser-291–Ser-302. In terms of domain architecture, C2 DOCK-type spans Asn-643–Ala-820. The interval Ser-1224–Gly-1267 is disordered. The DOCKER domain occupies Arg-1614–Phe-2040.

Belongs to the DOCK family.

Functionally, guanine nucleotide-exchange factor (GEF) that activates CDC42 by exchanging bound GDP for free GTP. In Danio rerio (Zebrafish), this protein is Dedicator of cytokinesis protein 11.